The following is a 293-amino-acid chain: NAD kinase (293 aa).

The active-site Proton acceptor is Asp73. NAD(+) contacts are provided by residues 73–74 (DG), 147–148 (NE), Arg175, Asp177, and 188–193 (TAYSMS).

This sequence belongs to the NAD kinase family. A divalent metal cation is required as a cofactor.

It is found in the cytoplasm. It catalyses the reaction NAD(+) + ATP = ADP + NADP(+) + H(+). Involved in the regulation of the intracellular balance of NAD and NADP, and is a key enzyme in the biosynthesis of NADP. Catalyzes specifically the phosphorylation on 2'-hydroxyl of the adenosine moiety of NAD to yield NADP. In Colwellia psychrerythraea (strain 34H / ATCC BAA-681) (Vibrio psychroerythus), this protein is NAD kinase.